Reading from the N-terminus, the 487-residue chain is Aspartyl/glutamyl-tRNA(Asn/Gln) amidotransferase subunit B (487 aa).

The protein belongs to the GatB/GatE family. GatB subfamily. As to quaternary structure, heterotrimer of A, B and C subunits.

It carries out the reaction L-glutamyl-tRNA(Gln) + L-glutamine + ATP + H2O = L-glutaminyl-tRNA(Gln) + L-glutamate + ADP + phosphate + H(+). The catalysed reaction is L-aspartyl-tRNA(Asn) + L-glutamine + ATP + H2O = L-asparaginyl-tRNA(Asn) + L-glutamate + ADP + phosphate + 2 H(+). Allows the formation of correctly charged Asn-tRNA(Asn) or Gln-tRNA(Gln) through the transamidation of misacylated Asp-tRNA(Asn) or Glu-tRNA(Gln) in organisms which lack either or both of asparaginyl-tRNA or glutaminyl-tRNA synthetases. The reaction takes place in the presence of glutamine and ATP through an activated phospho-Asp-tRNA(Asn) or phospho-Glu-tRNA(Gln). In Chlamydia abortus (strain DSM 27085 / S26/3) (Chlamydophila abortus), this protein is Aspartyl/glutamyl-tRNA(Asn/Gln) amidotransferase subunit B.